We begin with the raw amino-acid sequence, 185 residues long: Transcription termination/antitermination protein NusG (185 aa).

A KOW domain is found at 133 to 161 (PGEEVRVTEGPFADFNGTVEEVDYEKGRL).

Belongs to the NusG family.

In terms of biological role, participates in transcription elongation, termination and antitermination. This is Transcription termination/antitermination protein NusG from Haemophilus influenzae (strain ATCC 51907 / DSM 11121 / KW20 / Rd).